We begin with the raw amino-acid sequence, 561 residues long: Centromere protein T (561 aa).

A disordered region spans residues 1 to 83 (MADHNPDSDS…HIQASGHLEE (83 aa)). Over residues 18–27 (RVLDTADPRT) the composition is skewed to basic and acidic residues. Residues 34–46 (ARAGARRALLETA) are compositionally biased toward low complexity. Residue S47 is modified to Phosphoserine. At T85 the chain carries Phosphothreonine. Residues 93-421 (ILLTAPESSI…RHHQFLEPAP (329 aa)) form a flexible stalk domain region. Disordered stretches follow at residues 256–292 (HSLP…PGKP) and 333–457 (AEKK…DPHK). The segment covering 276–288 (KTQSSGPGLQKNS) has biased composition (polar residues). S343, S345, and S356 each carry phosphoserine. A compositionally biased stretch (basic and acidic residues) spans 357–367 (RVEEAEGHTEV). Phosphoserine occurs at positions 373, 385, 386, and 397. Positions 395–407 (AASPESASSTPES) are enriched in low complexity.

This sequence belongs to the CENP-T/CNN1 family. As to quaternary structure, component of the CENPA-CAD complex, composed of CENPI, CENPK, CENPL, CENPO, CENPP, CENPQ, CENPR and CENPS. The CENPA-CAD complex is probably recruited on centromeres by the CENPA-NAC complex, at least composed of CENPA, CENPC, CENPH, CENPM, CENPN, CENPT and CENPU. Identified in a centromeric complex containing histones H2A, H2B, H3 and H4, and at least CENPA, CENPB, CENPC, CENPT, CENPN, HJURP, SUPT16H, SSRP1 and RSF1. Interacts (via N-terminus) with the NDC80 complex. Heterodimer with CENPW; this dimer coassembles with CENPS-CENPX heterodimers at centromeres to form the tetrameric CENP-T-W-S-X complex. Dynamically phosphorylated at Ser-47 and probably also other sites during the cell cycle. Phosphorylated at Ser-47 during G2 phase, metaphase and anaphase, but not during telophase or G1 phase.

It is found in the nucleus. It localises to the chromosome. The protein localises to the centromere. The protein resides in the kinetochore. Component of the CENPA-NAC (nucleosome-associated) complex, a complex that plays a central role in assembly of kinetochore proteins, mitotic progression and chromosome segregation. The CENPA-NAC complex recruits the CENPA-CAD (nucleosome distal) complex and may be involved in incorporation of newly synthesized CENPA into centromeres. Part of a nucleosome-associated complex that binds specifically to histone H3-containing nucleosomes at the centromere, as opposed to nucleosomes containing CENPA. Component of the heterotetrameric CENP-T-W-S-X complex that binds and supercoils DNA, and plays an important role in kinetochore assembly. CENPT has a fundamental role in kinetochore assembly and function. It is one of the inner kinetochore proteins, with most further proteins binding downstream. Required for normal chromosome organization and normal progress through mitosis. In Homo sapiens (Human), this protein is Centromere protein T (CENPT).